The chain runs to 322 residues: Olfactory receptor 5P2 (322 aa).

Residues 1 to 28 (MNSLKDGNHTALTGFILLGLTDDPILRV) lie on the Extracellular side of the membrane. N-linked (GlcNAc...) asparagine glycosylation is present at Asn-8. Residues 29–42 (ILFMIILSGNLSII) traverse the membrane as a helical segment. Topologically, residues 43 to 50 (ILIRISSQ) are cytoplasmic. A helical membrane pass occupies residues 51–71 (LHHPMYFFLSHLAFADMAYSS). The Extracellular segment spans residues 72–95 (SVTPNMLVNFLVERNTVSYLGCAI). Cysteines 93 and 185 form a disulfide. The chain crosses the membrane as a helical span at residues 96–116 (QLGSAAFFATVECVLLAAMAY). At 117 to 135 (DRFVAICSPLLYSTKMSTQ) the chain is on the cytoplasmic side. Residues 136–156 (VSVQLLLVVYIAGFLIAVSYT) traverse the membrane as a helical segment. Topologically, residues 157 to 192 (TSFYFLLFCGPNQVNHFFCDFAPLLELSCSDISVST) are extracellular. Residues 193-213 (VVLSFSSGSIIVVTVCVIAVC) traverse the membrane as a helical segment. The Cytoplasmic portion of the chain corresponds to 214–233 (YIYILITILKMRSTEGHHKA). A helical transmembrane segment spans residues 234 to 254 (FSTCTSHLTVVTLFYGTITFI). Over 255 to 267 (YVMPNFSYSTDQN) the chain is Extracellular. N-linked (GlcNAc...) asparagine glycosylation is present at Asn-259. A helical transmembrane segment spans residues 268 to 288 (KVVSVLYTVVIPMLNPLIYSL). At 289–322 (RNKEIKGALKRELVRKILSHDACYFSRTSNNDIT) the chain is on the cytoplasmic side.

It belongs to the G-protein coupled receptor 1 family. Expressed in the tongue.

Its subcellular location is the cell membrane. Odorant receptor (Potential). May be involved in taste perception. The protein is Olfactory receptor 5P2 (OR5P2) of Homo sapiens (Human).